We begin with the raw amino-acid sequence, 239 residues long: Pyridoxine 5'-phosphate synthase (239 aa).

Position 7 (asparagine 7) interacts with 3-amino-2-oxopropyl phosphate. A 1-deoxy-D-xylulose 5-phosphate-binding site is contributed by 9–10; it reads DH. Arginine 18 lines the 3-amino-2-oxopropyl phosphate pocket. Histidine 43 acts as the Proton acceptor in catalysis. Residues arginine 45 and histidine 50 each contribute to the 1-deoxy-D-xylulose 5-phosphate site. The active-site Proton acceptor is the glutamate 70. Threonine 100 contacts 1-deoxy-D-xylulose 5-phosphate. Catalysis depends on histidine 191, which acts as the Proton donor. Residues glycine 192 and 213 to 214 each bind 3-amino-2-oxopropyl phosphate; that span reads GH.

It belongs to the PNP synthase family. As to quaternary structure, homooctamer; tetramer of dimers.

It localises to the cytoplasm. It carries out the reaction 3-amino-2-oxopropyl phosphate + 1-deoxy-D-xylulose 5-phosphate = pyridoxine 5'-phosphate + phosphate + 2 H2O + H(+). It participates in cofactor biosynthesis; pyridoxine 5'-phosphate biosynthesis; pyridoxine 5'-phosphate from D-erythrose 4-phosphate: step 5/5. Its function is as follows. Catalyzes the complicated ring closure reaction between the two acyclic compounds 1-deoxy-D-xylulose-5-phosphate (DXP) and 3-amino-2-oxopropyl phosphate (1-amino-acetone-3-phosphate or AAP) to form pyridoxine 5'-phosphate (PNP) and inorganic phosphate. In Geotalea uraniireducens (strain Rf4) (Geobacter uraniireducens), this protein is Pyridoxine 5'-phosphate synthase.